We begin with the raw amino-acid sequence, 317 residues long: Neuroguidin-A (317 aa).

2 disordered regions span residues 125-170 and 280-317; these read ENDP…SKVK and SALTGGEGRAEDMVPSMKKSKKGPKKSKKKKGFSRRRH. Over residues 146–157 the composition is skewed to acidic residues; sequence DERESDSGEEGA. Residues 297–317 show a composition bias toward basic residues; that stretch reads KKSKKGPKKSKKKKGFSRRRH.

The protein belongs to the SAS10 family. In terms of assembly, part of the small subunit (SSU) processome, composed of more than 70 proteins and the RNA chaperone small nucleolar RNA (snoRNA) U3.

Its subcellular location is the nucleus. It is found in the nucleolus. The protein resides in the chromosome. The protein localises to the centromere. It localises to the cytoplasm. Its subcellular location is the cell projection. It is found in the axon. The protein resides in the dendrite. The protein localises to the filopodium. Functionally, part of the small subunit (SSU) processome, first precursor of the small eukaryotic ribosomal subunit. During the assembly of the SSU processome in the nucleolus, many ribosome biogenesis factors, an RNA chaperone and ribosomal proteins associate with the nascent pre-rRNA and work in concert to generate RNA folding, modifications, rearrangements and cleavage as well as targeted degradation of pre-ribosomal RNA by the RNA exosome. Its dissociation from the complex determines the transition from state pre-A1 to state pre-A1*. May inhibit mRNA translation. This chain is Neuroguidin-A (ngdn-a), found in Xenopus laevis (African clawed frog).